We begin with the raw amino-acid sequence, 282 residues long: Elongation factor Ts (282 aa).

The segment at 79-82 (TDFV) is involved in Mg(2+) ion dislocation from EF-Tu.

This sequence belongs to the EF-Ts family.

The protein localises to the cytoplasm. Functionally, associates with the EF-Tu.GDP complex and induces the exchange of GDP to GTP. It remains bound to the aminoacyl-tRNA.EF-Tu.GTP complex up to the GTP hydrolysis stage on the ribosome. In Shewanella woodyi (strain ATCC 51908 / MS32), this protein is Elongation factor Ts.